The chain runs to 252 residues: Flavin-dependent thymidylate synthase (252 aa).

Residues leucine 7 to serine 235 form the ThyX domain. DUMP contacts are provided by residues glutamate 94–arginine 97, glutamine 105–arginine 109, and arginine 174. Residues arginine 97–arginine 99 and glutamine 105 each bind FAD. The ThyX motif motif lies at arginine 97–serine 107. FAD contacts are provided by residues asparagine 190–arginine 192 and histidine 196. DUMP is bound at residue arginine 201. Arginine 201 serves as the catalytic Involved in ionization of N3 of dUMP, leading to its activation.

The protein belongs to the thymidylate synthase ThyX family. Homotetramer. FAD serves as cofactor.

It carries out the reaction dUMP + (6R)-5,10-methylene-5,6,7,8-tetrahydrofolate + NADPH + H(+) = dTMP + (6S)-5,6,7,8-tetrahydrofolate + NADP(+). Its pathway is pyrimidine metabolism; dTTP biosynthesis. Catalyzes the reductive methylation of 2'-deoxyuridine-5'-monophosphate (dUMP) to 2'-deoxythymidine-5'-monophosphate (dTMP) while utilizing 5,10-methylenetetrahydrofolate (mTHF) as the methyl donor, and NADPH and FADH(2) as the reductant. In Corynebacterium diphtheriae (strain ATCC 700971 / NCTC 13129 / Biotype gravis), this protein is Flavin-dependent thymidylate synthase.